A 218-amino-acid polypeptide reads, in one-letter code: DNA-directed RNA polymerase III subunit RPC7-like (218 aa).

The interval 130–218 (TIILPKRPPK…SDDNMDEAIY (89 aa)) is disordered. The span at 139–160 (KSTDDKEETIQKLETLEKKEEE) shows a compositional bias: basic and acidic residues. Composition is skewed to acidic residues over residues 161 to 193 (VTSEEDEEKEEEEEKEEGEEEEYDEEEHEEETD) and 201 to 218 (NGEDFGGDSDDNMDEAIY).

This sequence belongs to the eukaryotic RPC7 RNA polymerase subunit family. As to quaternary structure, component of the RNA polymerase III (Pol III) complex consisting of 17 subunits. Pol III exists as two alternative complexes defined by the mutually exclusive incorporation of subunit POLR3G/RPC7alpha or POLR3GL/RPC7beta. Found in a trimeric complex with POLR3C/RPC3 and POLR3F/RPC6. Directly interacts with POLR3C. Expressed in the liver.

The protein localises to the nucleus. Functionally, DNA-dependent RNA polymerase catalyzes the transcription of DNA into RNA using the four ribonucleoside triphosphates as substrates. Specific peripheric component of RNA polymerase III which synthesizes small RNAs, such as 5S rRNA and tRNAs. This Mus musculus (Mouse) protein is DNA-directed RNA polymerase III subunit RPC7-like.